The sequence spans 117 residues: Large ribosomal subunit protein bL20 (117 aa).

The protein belongs to the bacterial ribosomal protein bL20 family.

In terms of biological role, binds directly to 23S ribosomal RNA and is necessary for the in vitro assembly process of the 50S ribosomal subunit. It is not involved in the protein synthesizing functions of that subunit. This chain is Large ribosomal subunit protein bL20, found in Photobacterium profundum (strain SS9).